The sequence spans 407 residues: MDSPCQPQPLSQALPQLPGSSSEPLEPEPGRARMGVESYLPCPLLPSYHCPGVPSEASAGSGTPRATATSTTASPLRDGFGGQDGGELRPLQSEGAAALVTKGCQRLAAQGARPEAPKRKWAEDGGDAPSPSKRPWARQENQEAEREGGMSCSCSSGSGEASAGLMEEALPSAPERLALDYIVPCMRYYGICVKDSFLGAALGGRVLAEVEALKRGGRLRDGQLVSQRAIPPRSIRGDQIAWVEGHEPGCRSIGALMAHVDAVIRHCAGRLGSYVINGRTKAMVACYPGNGLGYVRHVDNPHGDGRCITCIYYLNQNWDVKVHGGLLQIFPEGRPVVANIEPLFDRLLIFWSDRRNPHEVKPAYATRYAITVWYFDAKERAAAKDKYQLASGQKGVQVPVSQPPTPT.

2 stretches are compositionally biased toward low complexity: residues 1–24 and 57–75; these read MDSP…SSEP and ASAG…TASP. Disordered stretches follow at residues 1 to 34, 50 to 89, and 108 to 157; these read MDSP…RARM, CPGV…GELR, and AAQG…CSSG. Residues 89–134 carry the Bipartite nuclear localization signal motif; it reads RPLQSEGAAALVTKGCQRLAAQGARPEAPKRKWAEDGGDAPSPSKR. S130 is modified (phosphoserine). Residues 225-235 form a beta(2)beta(3) 'finger-like' loop region; that stretch reads VSQRAIPPRSI. The region spanning 278 to 376 is the Fe2OG dioxygenase domain; that stretch reads GRTKAMVACY…RYAITVWYFD (99 aa). Residues H297, D299, and H358 each contribute to the Fe cation site. R367 provides a ligand contact to 2-oxoglutarate.

Interacts (preferably isoform p40) with SIAH2; the interaction targets both SIAH2 isoforms for proteasomal degradation in vitro. Interacts with LIMD1, WTIP and AJUBA. Fe(2+) serves as cofactor. Requires L-ascorbate as cofactor. In terms of processing, ubiquitinated by SIAH1 and/or SIAH2 in response to the unfolded protein response (UPR), leading to its degradation. As to expression, expressed in adult and fetal heart, brain, liver, lung, skeletal muscle, and kidney. Also expressed in testis and placenta. Highest levels in adult brain, placenta, lung, kidney, and testis. Expressed in hormone responsive tissues, including normal and cancerous mammary, ovarian and prostate epithelium.

It localises to the nucleus. The enzyme catalyses L-prolyl-[protein] + 2-oxoglutarate + O2 = trans-4-hydroxy-L-prolyl-[protein] + succinate + CO2. It carries out the reaction L-prolyl-[hypoxia-inducible factor alpha subunit] + 2-oxoglutarate + O2 = trans-4-hydroxy-L-prolyl-[hypoxia-inducible factor alpha subunit] + succinate + CO2. Its function is as follows. Prolyl hydroxylase that mediates hydroxylation of proline residues in target proteins, such as ATF4, IKBKB, CEP192 and HIF1A. Target proteins are preferentially recognized via a LXXLAP motif. Cellular oxygen sensor that catalyzes, under normoxic conditions, the post-translational formation of 4-hydroxyproline in hypoxia-inducible factor (HIF) alpha proteins. Hydroxylates a specific proline found in each of the oxygen-dependent degradation (ODD) domains (N-terminal, NODD, and C-terminal, CODD) of HIF1A. Also hydroxylates HIF2A. Has a preference for the CODD site for both HIF1A and HIF2A. Hydroxylated HIFs are then targeted for proteasomal degradation via the von Hippel-Lindau ubiquitination complex. Under hypoxic conditions, the hydroxylation reaction is attenuated allowing HIFs to escape degradation resulting in their translocation to the nucleus, heterodimerization with HIF1B, and increased expression of hypoxy-inducible genes. EGLN2 is involved in regulating hypoxia tolerance and apoptosis in cardiac and skeletal muscle. Also regulates susceptibility to normoxic oxidative neuronal death. Links oxygen sensing to cell cycle and primary cilia formation by hydroxylating the critical centrosome component CEP192 which promotes its ubiquitination and subsequent proteasomal degradation. Hydroxylates IKBKB, mediating NF-kappa-B activation in hypoxic conditions. Also mediates hydroxylation of ATF4, leading to decreased protein stability of ATF4. The chain is Prolyl hydroxylase EGLN2 from Homo sapiens (Human).